Here is a 490-residue protein sequence, read N- to C-terminus: Cytochrome P450 2C2 (490 aa).

Cys435 contacts heme.

The protein belongs to the cytochrome P450 family. Heme serves as cofactor.

The protein localises to the endoplasmic reticulum membrane. Its subcellular location is the microsome membrane. It carries out the reaction an organic molecule + reduced [NADPH--hemoprotein reductase] + O2 = an alcohol + oxidized [NADPH--hemoprotein reductase] + H2O + H(+). Functionally, cytochromes P450 are a group of heme-thiolate monooxygenases. In liver microsomes, this enzyme is involved in an NADPH-dependent electron transport pathway. It oxidizes a variety of structurally unrelated compounds, including steroids, fatty acids, and xenobiotics. In the epoxidation of arachidonic acid it generates only 14,15- and 11,12-cis-epoxyeicosatrienoic acids. This is Cytochrome P450 2C2 (CYP2C2) from Oryctolagus cuniculus (Rabbit).